A 27-amino-acid chain; its full sequence is uncharacterized protein (27 aa).

This is an uncharacterized protein from Escherichia coli (strain K12).